Here is a 512-residue protein sequence, read N- to C-terminus: Annexin A7 (512 aa).

A compositionally biased stretch (low complexity) spans 14-38 (GYPGGDPSYPPAAQQAFPGGQFPPA). Disordered regions lie at residues 14-62 (GYPG…GYPH) and 146-190 (GGFS…AQPT). The segment covering 39–52 (AGGGAFPPASGGGN) has biased composition (gly residues). Residues 164 to 182 (MPGQMPGQMPGQAPSGYPS) are compositionally biased toward low complexity. Annexin repeat units follow at residues 209 to 279 (FDAL…ALFM), 280 to 351 (PSTY…SIMA), 364 to 436 (QQAE…AVLQ), and 440 to 511 (NRPL…AISG).

It belongs to the annexin family.

Its function is as follows. Calcium/phospholipid-binding protein which promotes membrane fusion and is involved in exocytosis. The polypeptide is Annexin A7 (anxa7) (Xenopus laevis (African clawed frog)).